The primary structure comprises 354 residues: Uroporphyrinogen decarboxylase (354 aa).

Substrate-binding positions include 25–29 (RQAGR), Asp75, Tyr152, Thr207, and His330.

Belongs to the uroporphyrinogen decarboxylase family. Homodimer.

It localises to the cytoplasm. It carries out the reaction uroporphyrinogen III + 4 H(+) = coproporphyrinogen III + 4 CO2. It participates in porphyrin-containing compound metabolism; protoporphyrin-IX biosynthesis; coproporphyrinogen-III from 5-aminolevulinate: step 4/4. In terms of biological role, catalyzes the decarboxylation of four acetate groups of uroporphyrinogen-III to yield coproporphyrinogen-III. This chain is Uroporphyrinogen decarboxylase, found in Xanthomonas campestris pv. campestris (strain 8004).